An 861-amino-acid chain; its full sequence is DNA mismatch repair protein MutS (861 aa).

An ATP-binding site is contributed by 614-621 (GPNMGGKS).

It belongs to the DNA mismatch repair MutS family.

In terms of biological role, this protein is involved in the repair of mismatches in DNA. It is possible that it carries out the mismatch recognition step. This protein has a weak ATPase activity. The sequence is that of DNA mismatch repair protein MutS from Mannheimia succiniciproducens (strain KCTC 0769BP / MBEL55E).